A 901-amino-acid polypeptide reads, in one-letter code: Probable inorganic carbon transporter subunit DabA (901 aa).

Zn(2+) contacts are provided by cysteine 424, aspartate 426, histidine 606, and cysteine 621.

The protein belongs to the inorganic carbon transporter (TC 9.A.2) DabA family. Forms a complex with DabB. The cofactor is Zn(2+).

The protein resides in the cell membrane. Its function is as follows. Part of an energy-coupled inorganic carbon pump. This chain is Probable inorganic carbon transporter subunit DabA, found in Staphylococcus aureus (strain MRSA252).